The sequence spans 211 residues: Ribosomal RNA small subunit methyltransferase G (211 aa).

S-adenosyl-L-methionine-binding residues include Gly-73, Phe-78, and Arg-141.

The protein belongs to the methyltransferase superfamily. RNA methyltransferase RsmG family.

The protein resides in the cytoplasm. It carries out the reaction guanosine(527) in 16S rRNA + S-adenosyl-L-methionine = N(7)-methylguanosine(527) in 16S rRNA + S-adenosyl-L-homocysteine. In terms of biological role, specifically methylates the N7 position of guanine in position 527 of 16S rRNA. This Jannaschia sp. (strain CCS1) protein is Ribosomal RNA small subunit methyltransferase G.